The primary structure comprises 256 residues: 5'-nucleotidase SurE (256 aa).

Residues Asp13, Asp14, Ser44, and Asn101 each coordinate a divalent metal cation.

This sequence belongs to the SurE nucleotidase family. It depends on a divalent metal cation as a cofactor.

The protein localises to the cytoplasm. It carries out the reaction a ribonucleoside 5'-phosphate + H2O = a ribonucleoside + phosphate. Its function is as follows. Nucleotidase that shows phosphatase activity on nucleoside 5'-monophosphates. The sequence is that of 5'-nucleotidase SurE from Porphyromonas gingivalis (strain ATCC 33277 / DSM 20709 / CIP 103683 / JCM 12257 / NCTC 11834 / 2561).